We begin with the raw amino-acid sequence, 286 residues long: Oxidase hkm6 (286 aa).

The Cu cation site is built by H16, H25, and H215.

The protein belongs to the tyrosinase family. The cofactor is Cu(2+).

Its pathway is secondary metabolite biosynthesis. Oxidase; part of the gene cluster that mediates the biosynthesis of hancockiamides, an unusual new family of N-cinnamoylated piperazines. The NRPS hkm10 and the NmrA-like reductase hkm9 are proposed to convert two molecules of L-Phe to the intermediary piperazine called xenocockiamide A. Xenocockiamide A is then converted to hancockiamide D via a series of hydroxylations and O-methylations. The tyrosinase hkm6 may catalyze an aromatic hydroxylation, then the 2-oxoglutarate-dependent Fe(II) dioxygenase hkm4 and the FAD-dependent phenol hydroxylase hkm7 may catalyze consecutive hydroxylations to install 2 more hydroxy groups, and the methyltransferase hkm8 probably catalyzes two methylations using 2 molecules of S-adenosyl-L-methionine (SAM). The NRPS hkm11 activates and transfers trans-cinnamate supplied by the PAL hkm12 to hancockiamide D and produces hancockiamide A. NRPS Hkm11 has the flexibility to tolerate the bulky hancockiamide G as a substrate and the absence of the acetyl-transferase hkm3 opens up the opportunity for hkm11 to introduce a second N-cinnamoyl moiety. The cytochrome P450 monooxygenase hkm5 catalyzes the methylenedioxy bridge formation, converting hancockiamide A into hancockiamide G. Hkm5 can also convert hancockiamide B into hancockiamide C, and hancockiamide D into hancockiamide H. The N-acetyltransferase hkm3 finally transfers an acetyl group to 1-N of piperazine, converting hancockiamide A into hancockiamide B and hancockiamide G into hancockiamide C. The chain is Oxidase hkm6 from Aspergillus hancockii.